We begin with the raw amino-acid sequence, 433 residues long: Enolase (433 aa).

Q167 serves as a coordination point for (2R)-2-phosphoglycerate. E209 acts as the Proton donor in catalysis. Mg(2+) is bound by residues D246, E291, and D318. K343, R372, S373, and K394 together coordinate (2R)-2-phosphoglycerate. Residue K343 is the Proton acceptor of the active site.

The protein belongs to the enolase family. Component of the RNA degradosome, a multiprotein complex involved in RNA processing and mRNA degradation. Mg(2+) serves as cofactor.

Its subcellular location is the cytoplasm. The protein localises to the secreted. The protein resides in the cell surface. The catalysed reaction is (2R)-2-phosphoglycerate = phosphoenolpyruvate + H2O. It functions in the pathway carbohydrate degradation; glycolysis; pyruvate from D-glyceraldehyde 3-phosphate: step 4/5. In terms of biological role, catalyzes the reversible conversion of 2-phosphoglycerate (2-PG) into phosphoenolpyruvate (PEP). It is essential for the degradation of carbohydrates via glycolysis. In Edwardsiella ictaluri (strain 93-146), this protein is Enolase.